Consider the following 467-residue polypeptide: Protein arginine methyltransferase NDUFAF7 homolog, mitochondrial (467 aa).

The protein belongs to the NDUFAF7 family.

It localises to the mitochondrion. It carries out the reaction L-arginyl-[protein] + 2 S-adenosyl-L-methionine = N(omega),N(omega)'-dimethyl-L-arginyl-[protein] + 2 S-adenosyl-L-homocysteine + 2 H(+). Its function is as follows. Arginine methyltransferase involved in the assembly or stability of mitochondrial NADH:ubiquinone oxidoreductase complex (complex I). This is Protein arginine methyltransferase NDUFAF7 homolog, mitochondrial from Schizosaccharomyces pombe (strain 972 / ATCC 24843) (Fission yeast).